Here is a 212-residue protein sequence, read N- to C-terminus: Pyridoxine/pyridoxamine 5'-phosphate oxidase (212 aa).

Substrate-binding positions include R8–Y11 and K66. FMN is bound by residues R61–K66, F76–T77, R82, K83, and Q105. Y123, R127, and S131 together coordinate substrate. Residues Q140 to S141 and W185 contribute to the FMN site. R191 to H193 lines the substrate pocket. R195 serves as a coordination point for FMN.

The protein belongs to the pyridoxamine 5'-phosphate oxidase family. As to quaternary structure, homodimer. The cofactor is FMN.

It catalyses the reaction pyridoxamine 5'-phosphate + O2 + H2O = pyridoxal 5'-phosphate + H2O2 + NH4(+). The catalysed reaction is pyridoxine 5'-phosphate + O2 = pyridoxal 5'-phosphate + H2O2. The protein operates within cofactor metabolism; pyridoxal 5'-phosphate salvage; pyridoxal 5'-phosphate from pyridoxamine 5'-phosphate: step 1/1. It participates in cofactor metabolism; pyridoxal 5'-phosphate salvage; pyridoxal 5'-phosphate from pyridoxine 5'-phosphate: step 1/1. Functionally, catalyzes the oxidation of either pyridoxine 5'-phosphate (PNP) or pyridoxamine 5'-phosphate (PMP) into pyridoxal 5'-phosphate (PLP). The polypeptide is Pyridoxine/pyridoxamine 5'-phosphate oxidase (Shewanella putrefaciens (strain CN-32 / ATCC BAA-453)).